The chain runs to 151 residues: Aspartate carbamoyltransferase regulatory chain (151 aa).

The Zn(2+) site is built by cysteine 107, cysteine 112, cysteine 135, and cysteine 138.

It belongs to the PyrI family. Contains catalytic and regulatory chains. It depends on Zn(2+) as a cofactor.

In terms of biological role, involved in allosteric regulation of aspartate carbamoyltransferase. This Thermococcus gammatolerans (strain DSM 15229 / JCM 11827 / EJ3) protein is Aspartate carbamoyltransferase regulatory chain.